The primary structure comprises 167 residues: Inclusion membrane protein G (167 aa).

The next 2 membrane-spanning stretches (helical) occupy residues 33–57 and 63–88; these read VVLA…AVLF and VLPY…LRSL. The sufficient for interaction with human 14-3-3 beta protein stretch occupies residues 94-167; it reads SCKKRSPEEI…DNSRSRSRSF (74 aa). A disordered region spans residues 97-167; the sequence is KRSPEEIEGA…DNSRSRSRSF (71 aa). The span at 122–135 shows a compositional bias: low complexity; the sequence is ESASPQASPTSSTL. The short motif at 161–166 is the Phosphorylation-dependent binding motif element; sequence RSRSRS. Ser166 carries the phosphoserine modification.

In infected HeLa cells colocalizes with host 14-3-3 protein (YWHAB); phosphorylation of Ser-166 is probably required. Interacts with Pkn1. Post-translationally, phosphorylated, possibly at more than one position, in infected HeLa cells. Phosphorylated by chlamydial kinase Pnk1.

The protein resides in the secreted. It is found in the host vacuole. The protein localises to the host pathogen-containing vacuole. It localises to the host pathogen-containing vacuole membrane. In terms of biological role, inclusion membrane protein probably involved in early modification events of the chlamydial inclusion. The polypeptide is Inclusion membrane protein G (Chlamydia trachomatis serovar L2 (strain ATCC VR-902B / DSM 19102 / 434/Bu)).